The primary structure comprises 485 residues: Glutamate--tRNA ligase 1 (485 aa).

Residues 10–20 (PSPTGAIHIGN) carry the 'HIGH' region motif. The short motif at 252–256 (KLSKR) is the 'KMSKS' region element. K255 contributes to the ATP binding site.

This sequence belongs to the class-I aminoacyl-tRNA synthetase family. Glutamate--tRNA ligase type 1 subfamily. Monomer.

It is found in the cytoplasm. The enzyme catalyses tRNA(Glu) + L-glutamate + ATP = L-glutamyl-tRNA(Glu) + AMP + diphosphate. In terms of biological role, catalyzes the attachment of glutamate to tRNA(Glu) in a two-step reaction: glutamate is first activated by ATP to form Glu-AMP and then transferred to the acceptor end of tRNA(Glu). This is Glutamate--tRNA ligase 1 from Thermoanaerobacter sp. (strain X514).